Here is a 226-residue protein sequence, read N- to C-terminus: Urease accessory protein UreF (226 aa).

Belongs to the UreF family. UreD, UreF and UreG form a complex that acts as a GTP-hydrolysis-dependent molecular chaperone, activating the urease apoprotein by helping to assemble the nickel containing metallocenter of UreC. The UreE protein probably delivers the nickel.

The protein resides in the cytoplasm. Functionally, required for maturation of urease via the functional incorporation of the urease nickel metallocenter. The sequence is that of Urease accessory protein UreF from Corynebacterium glutamicum (strain R).